A 435-amino-acid chain; its full sequence is Serine hydroxymethyltransferase (435 aa).

Residues Leu-133 and 137–139 (GHL) contribute to the (6S)-5,6,7,8-tetrahydrofolate site. Lys-242 is subject to N6-(pyridoxal phosphate)lysine.

The protein belongs to the SHMT family. In terms of assembly, homodimer. Pyridoxal 5'-phosphate is required as a cofactor.

The protein localises to the cytoplasm. The enzyme catalyses (6R)-5,10-methylene-5,6,7,8-tetrahydrofolate + glycine + H2O = (6S)-5,6,7,8-tetrahydrofolate + L-serine. Its pathway is one-carbon metabolism; tetrahydrofolate interconversion. It participates in amino-acid biosynthesis; glycine biosynthesis; glycine from L-serine: step 1/1. In terms of biological role, catalyzes the reversible interconversion of serine and glycine with tetrahydrofolate (THF) serving as the one-carbon carrier. This reaction serves as the major source of one-carbon groups required for the biosynthesis of purines, thymidylate, methionine, and other important biomolecules. Also exhibits THF-independent aldolase activity toward beta-hydroxyamino acids, producing glycine and aldehydes, via a retro-aldol mechanism. This chain is Serine hydroxymethyltransferase, found in Sphingopyxis alaskensis (strain DSM 13593 / LMG 18877 / RB2256) (Sphingomonas alaskensis).